The chain runs to 352 residues: Spermidine/putrescine import ATP-binding protein PotA (352 aa).

An ABC transporter domain is found at 7-237; it reads IELKNVSKKY…PKNKFVANFI (231 aa). 39 to 46 lines the ATP pocket; the sequence is GPSGCGKT.

This sequence belongs to the ABC transporter superfamily. Spermidine/putrescine importer (TC 3.A.1.11.1) family. The complex is composed of two ATP-binding proteins (PotA), two transmembrane proteins (PotB and PotC) and a solute-binding protein (PotD).

Its subcellular location is the cell membrane. The enzyme catalyses ATP + H2O + polyamine-[polyamine-binding protein]Side 1 = ADP + phosphate + polyamineSide 2 + [polyamine-binding protein]Side 1.. In terms of biological role, part of the ABC transporter complex PotABCD involved in spermidine/putrescine import. Responsible for energy coupling to the transport system. The protein is Spermidine/putrescine import ATP-binding protein PotA of Clostridium acetobutylicum (strain ATCC 824 / DSM 792 / JCM 1419 / IAM 19013 / LMG 5710 / NBRC 13948 / NRRL B-527 / VKM B-1787 / 2291 / W).